A 252-amino-acid chain; its full sequence is 5'-nucleotidase SurE (252 aa).

A divalent metal cation contacts are provided by aspartate 8, aspartate 9, serine 42, and asparagine 94.

The protein belongs to the SurE nucleotidase family. The cofactor is a divalent metal cation.

It localises to the cytoplasm. The catalysed reaction is a ribonucleoside 5'-phosphate + H2O = a ribonucleoside + phosphate. Its function is as follows. Nucleotidase that shows phosphatase activity on nucleoside 5'-monophosphates. In Ehrlichia ruminantium (strain Gardel), this protein is 5'-nucleotidase SurE.